The primary structure comprises 250 residues: Probable 2' cyclic ADP-D-ribose synthase TcpB (250 aa).

A disordered region spans residues 1 to 46 (MSKEKQAQSKAHKAQQAISSAKSLSTQKSKMSELERATRDGAAIGK). Over residues 14 to 23 (AQQAISSAKS) the composition is skewed to low complexity. Over residues 30 to 39 (KMSELERATR) the composition is skewed to basic and acidic residues. Positions 117-250 (EEYDFFISHA…EIAKELHSLI (134 aa)) constitute a TIR domain. Residue Glu-192 is part of the active site.

Homodimer. Interacts with host TIRAP. Interacts with host TLR4, abolishes the interaction of host TIRAP with TLR4.

The protein resides in the secreted. It localises to the host cell membrane. It catalyses the reaction NAD(+) + H2O = ADP-D-ribose + nicotinamide + H(+). The catalysed reaction is NAD(+) = 2'cADPR + nicotinamide + H(+). Virulence factor that interferes with host Toll-like receptor 2 (TLR2) signaling, resulting in the reduction of dendritic cell maturation, inhibition of pro-inflammatory cytokine secretion and impaired NF-kappa-B activation in macrophages. Also acts on host TLR4. Binds host lipids. Has NAD(+) hydrolase (NADase) activity, catalyzes cleavage of NAD(+) into ADP-D-ribose (ADPR) and nicotinamide, also generates a cyclization variant of cyclic ADPR (cADPR), termed v-cADPR (probably 2'cADPR). The chain is Probable 2' cyclic ADP-D-ribose synthase TcpB from Brucella abortus (strain 2308).